A 75-amino-acid polypeptide reads, in one-letter code: Small ribosomal subunit protein bS18 (75 aa).

The protein belongs to the bacterial ribosomal protein bS18 family. As to quaternary structure, part of the 30S ribosomal subunit. Forms a tight heterodimer with protein bS6.

Functionally, binds as a heterodimer with protein bS6 to the central domain of the 16S rRNA, where it helps stabilize the platform of the 30S subunit. This chain is Small ribosomal subunit protein bS18, found in Laribacter hongkongensis (strain HLHK9).